We begin with the raw amino-acid sequence, 1048 residues long: Bifunctional heparan sulfate N-deacetylase/N-sulfotransferase (1048 aa).

Topologically, residues 1–172 (MTISGGNQHN…RRCFGINVRR (172 aa)) are cytoplasmic. The chain crosses the membrane as a helical; Signal-anchor for type II membrane protein span at residues 173-192 (CVLALLAITMVSIFYYTHYV). A heparan sulfate N-deacetylase region spans residues 192–752 (VDTGVFNGLI…VRHKKIWSKT (561 aa)). At 193–1048 (DTGVFNGLIQ…WLKDDLSTGT (856 aa)) the chain is on the lumenal side. N-linked (GlcNAc...) asparagine glycans are attached at residues Asn388 and Asn555. Residues 753 to 1048 (KNCDSLPKFL…WLKDDLSTGT (296 aa)) are heparan sulfate N-sulfotransferase. Residue Lys768 is the For sulfotransferase activity of the active site. Residue 768 to 772 (KTGTT) participates in 3'-phosphoadenylyl sulfate binding. N-linked (GlcNAc...) asparagine glycosylation occurs at Asn823. Ser877 lines the 3'-phosphoadenylyl sulfate pocket. Asn892 carries an N-linked (GlcNAc...) asparagine glycan. The cysteines at positions 983 and 993 are disulfide-linked. 998 to 1002 (KGRQY) lines the 3'-phosphoadenylyl sulfate pocket.

Belongs to the sulfotransferase 1 family. NDST subfamily. Monomer.

Its subcellular location is the golgi apparatus membrane. The catalysed reaction is alpha-D-glucosaminyl-[heparan sulfate](n) + 3'-phosphoadenylyl sulfate = N-sulfo-alpha-D-glucosaminyl-[heparan sulfate](n) + adenosine 3',5'-bisphosphate + 2 H(+). The protein operates within glycan metabolism; heparan sulfate biosynthesis. Its pathway is glycan metabolism; heparin biosynthesis. Functionally, essential bifunctional enzyme that catalyzes both the N-deacetylation and the N-sulfation of glucosamine (GlcNAc) of the glycosaminoglycan in heparan sulfate. Modifies the GlcNAc-GlcA disaccharide repeating sugar backbone to make N-sulfated heparosan, a prerequisite substrate for later modifications in heparin biosynthesis. Plays a role in diffusion of morphogen wingless (wg) via its role in heparan sulfate proteoglycans (HSPGs) biosynthesis, HSPGs being required for movement of wg morphogens. Required for wg signaling during both embryonic and imaginal disk development. Also required for FGF receptor signaling. In Drosophila melanogaster (Fruit fly), this protein is Bifunctional heparan sulfate N-deacetylase/N-sulfotransferase (sfl).